Here is a 506-residue protein sequence, read N- to C-terminus: Ubiquitin carboxyl-terminal hydrolase 22 (506 aa).

Residues 4–121 (AGCSHVNGFK…KEEQRKAWKL (118 aa)) form a UBP-type zinc finger. Cysteine 6, histidine 8, cysteine 46, cysteine 49, cysteine 59, cysteine 62, cysteine 67, histidine 72, histidine 76, histidine 82, cysteine 95, and cysteine 98 together coordinate Zn(2+). The 343-residue stretch at 159 to 501 (RGLINLGNTC…EGYLLFYHKQ (343 aa)) folds into the USP domain. The active-site Nucleophile is cysteine 168. Histidine 460 (proton acceptor) is an active-site residue.

The protein belongs to the peptidase C19 family. UBP8 subfamily. In terms of assembly, component of some SAGA transcription coactivator-HAT complexes.

The protein localises to the nucleus. It catalyses the reaction Thiol-dependent hydrolysis of ester, thioester, amide, peptide and isopeptide bonds formed by the C-terminal Gly of ubiquitin (a 76-residue protein attached to proteins as an intracellular targeting signal).. In terms of biological role, histone deubiquitinating component of the transcription regulatory histone acetylation (HAT) complex SAGA. Catalyzes the deubiquitination of both histones H2A and H2B, thereby acting as a coactivator. Recruited to specific gene promoters by activators, where it is required for transcription. The protein is Ubiquitin carboxyl-terminal hydrolase 22 (usp22) of Danio rerio (Zebrafish).